The sequence spans 483 residues: Nucleolar protein 4 (483 aa).

Disordered stretches follow at residues 210 to 418 (QQDE…PIPS) and 435 to 483 (SESR…DPQI). The span at 211–225 (QDEDESSIESDEFDM) shows a compositional bias: acidic residues. 3 stretches are compositionally biased toward polar residues: residues 229–254 (TRMSAVNSDLSSNLEERMQSPQTVHG), 262–271 (AESSNGNETL), and 302–317 (QPLNLSDSPSSAQLTS). Basic and acidic residues-rich tracts occupy residues 319-330 (FRIDDQGSDGKN) and 340-350 (LKMEREARENG). The span at 351-363 (SKSPAHSYSSYDS) shows a compositional bias: polar residues. Basic and acidic residues-rich tracts occupy residues 364-374 (GKNESVDRGAE), 391-409 (HEDSEKVNETDGVEAERLK), and 435-451 (SESRNAAKRMRLDKAQD). Residues 467–483 (ATYSTATVPGSQEDPQI) show a composition bias toward polar residues.

It is found in the nucleus. The protein resides in the nucleolus. The polypeptide is Nucleolar protein 4 (Nol4) (Mus musculus (Mouse)).